We begin with the raw amino-acid sequence, 270 residues long: Ribosomal RNA-processing protein 7 homolog (270 aa).

Positions 233–268 form a coiled coil; sequence TFQIKKNRQEKAQELLKKFEEDRKRITQLKQARNFK.

It belongs to the RRP7 family.

The sequence is that of Ribosomal RNA-processing protein 7 homolog from Caenorhabditis elegans.